Consider the following 251-residue polypeptide: Ribosomal RNA small subunit methyltransferase J (251 aa).

Residues 100–101 (RD), 116–117 (ER), and Asp-170 contribute to the S-adenosyl-L-methionine site.

This sequence belongs to the methyltransferase superfamily. RsmJ family.

The protein resides in the cytoplasm. The catalysed reaction is guanosine(1516) in 16S rRNA + S-adenosyl-L-methionine = N(2)-methylguanosine(1516) in 16S rRNA + S-adenosyl-L-homocysteine + H(+). Its function is as follows. Specifically methylates the guanosine in position 1516 of 16S rRNA. This is Ribosomal RNA small subunit methyltransferase J from Haemophilus ducreyi (strain 35000HP / ATCC 700724).